A 500-amino-acid polypeptide reads, in one-letter code: Probable cardiolipin synthase YwiE (500 aa).

Helical transmembrane passes span 6-26 (LEFF…FFPV), 31-51 (FYGG…SLIL), and 59-79 (TLLW…FYLF). PLD phosphodiesterase domains are found at residues 237 to 264 (LNFR…GKEY) and 413 to 440 (QKGF…DMRS). Catalysis depends on residues histidine 242, lysine 244, aspartate 249, histidine 418, lysine 420, and aspartate 425.

This sequence belongs to the phospholipase D family. Cardiolipin synthase subfamily.

It is found in the cell membrane. It carries out the reaction 2 a 1,2-diacyl-sn-glycero-3-phospho-(1'-sn-glycerol) = a cardiolipin + glycerol. Functionally, catalyzes the reversible phosphatidyl group transfer from one phosphatidylglycerol molecule to another to form cardiolipin (CL) (diphosphatidylglycerol) and glycerol. May have a role in the heat shock response since the level of the transcript of ywiE increases after a heat shock. This is Probable cardiolipin synthase YwiE (ywiE) from Bacillus subtilis (strain 168).